Reading from the N-terminus, the 72-residue chain is Nod factor export ATP-binding protein I (72 aa).

This sequence belongs to the ABC transporter superfamily. Lipooligosaccharide exporter (TC 3.A.1.102) family. As to quaternary structure, the complex is composed of two ATP-binding proteins (NodI) and two transmembrane proteins (NodJ).

The protein localises to the cell inner membrane. Part of the ABC transporter complex NodIJ involved in the export of the nodulation factors (Nod factors), the bacterial signal molecules that induce symbiosis and subsequent nodulation induction. Nod factors are LCO (lipo-chitin oligosaccharide), a modified beta-1,4-linked N-acetylglucosamine oligosaccharide. This subunit is responsible for energy coupling to the transport system. This Rhizobium leguminosarum bv. trifolii protein is Nod factor export ATP-binding protein I.